A 284-amino-acid chain; its full sequence is MEMO1 family protein MMP1387 (284 aa).

The protein belongs to the MEMO1 family.

This chain is MEMO1 family protein MMP1387, found in Methanococcus maripaludis (strain DSM 14266 / JCM 13030 / NBRC 101832 / S2 / LL).